A 423-amino-acid polypeptide reads, in one-letter code: Serine--tRNA ligase (423 aa).

Basic and acidic residues predominate over residues 1 to 12 (MIDLKALRENPD). The disordered stretch occupies residues 1–26 (MIDLKALRENPDVGRASQRSRGEDPE). 230 to 232 (TSE) lines the L-serine pocket. Residues 261-263 (RRE) and valine 277 each bind ATP. Glutamate 284 is an L-serine binding site. Residue 348 to 351 (ELTS) coordinates ATP. Threonine 383 contacts L-serine.

This sequence belongs to the class-II aminoacyl-tRNA synthetase family. Type-1 seryl-tRNA synthetase subfamily. In terms of assembly, homodimer. The tRNA molecule binds across the dimer.

It localises to the cytoplasm. The enzyme catalyses tRNA(Ser) + L-serine + ATP = L-seryl-tRNA(Ser) + AMP + diphosphate + H(+). The catalysed reaction is tRNA(Sec) + L-serine + ATP = L-seryl-tRNA(Sec) + AMP + diphosphate + H(+). Its pathway is aminoacyl-tRNA biosynthesis; selenocysteinyl-tRNA(Sec) biosynthesis; L-seryl-tRNA(Sec) from L-serine and tRNA(Sec): step 1/1. Catalyzes the attachment of serine to tRNA(Ser). Is also able to aminoacylate tRNA(Sec) with serine, to form the misacylated tRNA L-seryl-tRNA(Sec), which will be further converted into selenocysteinyl-tRNA(Sec). The chain is Serine--tRNA ligase from Beutenbergia cavernae (strain ATCC BAA-8 / DSM 12333 / CCUG 43141 / JCM 11478 / NBRC 16432 / NCIMB 13614 / HKI 0122).